The chain runs to 740 residues: Catalase-peroxidase (740 aa).

Residues 1-27 (MFKSTLPIAAAISVALTSMVLPAKALA) form the signal peptide. A cross-link (tryptophyl-tyrosyl-methioninium (Trp-Tyr) (with M-254)) is located at residues 106-228 (WHSAGVYRVH…LAAVEMGLIY (123 aa)). H107 serves as the catalytic Proton acceptor. Residues 228-254 (YVNPEGPHGKPDPLLAANDIRMSFGRM) constitute a cross-link (tryptophyl-tyrosyl-methioninium (Tyr-Met) (with W-106)). H269 contributes to the heme b binding site.

The protein belongs to the peroxidase family. Peroxidase/catalase subfamily. Homodimer or homotetramer. Heme b is required as a cofactor. Formation of the three residue Trp-Tyr-Met cross-link is important for the catalase, but not the peroxidase activity of the enzyme.

It carries out the reaction H2O2 + AH2 = A + 2 H2O. The enzyme catalyses 2 H2O2 = O2 + 2 H2O. In terms of biological role, bifunctional enzyme with both catalase and broad-spectrum peroxidase activity. The sequence is that of Catalase-peroxidase from Colwellia psychrerythraea (strain 34H / ATCC BAA-681) (Vibrio psychroerythus).